The following is a 661-amino-acid chain: DNA ligase (661 aa).

Residues Asp-31 to Asp-35, Ser-80 to Leu-81, and Glu-109 contribute to the NAD(+) site. Lys-111 serves as the catalytic N6-AMP-lysine intermediate. Positions 132, 167, 283, and 307 each coordinate NAD(+). Zn(2+)-binding residues include Cys-401, Cys-404, Cys-419, and Cys-424. The region spanning Ala-582–Ser-661 is the BRCT domain.

It belongs to the NAD-dependent DNA ligase family. LigA subfamily. Requires Mg(2+) as cofactor. Mn(2+) serves as cofactor.

It carries out the reaction NAD(+) + (deoxyribonucleotide)n-3'-hydroxyl + 5'-phospho-(deoxyribonucleotide)m = (deoxyribonucleotide)n+m + AMP + beta-nicotinamide D-nucleotide.. DNA ligase that catalyzes the formation of phosphodiester linkages between 5'-phosphoryl and 3'-hydroxyl groups in double-stranded DNA using NAD as a coenzyme and as the energy source for the reaction. It is essential for DNA replication and repair of damaged DNA. The chain is DNA ligase from Syntrophomonas wolfei subsp. wolfei (strain DSM 2245B / Goettingen).